We begin with the raw amino-acid sequence, 342 residues long: Phosphate acyltransferase (342 aa).

It belongs to the PlsX family. In terms of assembly, homodimer. Probably interacts with PlsY.

Its subcellular location is the cytoplasm. The enzyme catalyses a fatty acyl-[ACP] + phosphate = an acyl phosphate + holo-[ACP]. Its pathway is lipid metabolism; phospholipid metabolism. Catalyzes the reversible formation of acyl-phosphate (acyl-PO(4)) from acyl-[acyl-carrier-protein] (acyl-ACP). This enzyme utilizes acyl-ACP as fatty acyl donor, but not acyl-CoA. This Shewanella loihica (strain ATCC BAA-1088 / PV-4) protein is Phosphate acyltransferase.